The following is a 512-amino-acid chain: Choline-sulfatase (512 aa).

Ca(2+) is bound by residues D14, Q15, and C54. The active-site Nucleophile is C54. Residue C54 is modified to 3-oxoalanine (Cys). H104 is a catalytic residue. Ca(2+) is bound by residues D296 and H297.

This sequence belongs to the sulfatase family. Ca(2+) serves as cofactor. Post-translationally, the conversion to 3-oxoalanine (also known as C-formylglycine, FGly), of a serine or cysteine residue in prokaryotes and of a cysteine residue in eukaryotes, is critical for catalytic activity.

It carries out the reaction choline sulfate + H2O = choline + sulfate + H(+). It functions in the pathway amine and polyamine biosynthesis; choline biosynthesis; choline from choline sulfate: step 1/1. In terms of biological role, converts choline-O-sulfate into choline. The polypeptide is Choline-sulfatase (betC) (Rhizobium meliloti (strain 1021) (Ensifer meliloti)).